The chain runs to 236 residues: Cytochrome b-c1 complex subunit Rieske-4, mitochondrial (236 aa).

The N-terminal 24 residues, 1–24, are a transit peptide targeting the mitochondrion; that stretch reads MINFGSCWGLASVTSNSFSIISGF. The Mitochondrial matrix portion of the chain corresponds to 25–73; the sequence is SSNSVSHAHDMGLVPDLPPTVAAIKNPTSKIVYDEHNHERYPPGDPSKR. Residues 74–96 form a helical membrane-spanning segment; sequence AFAYFVLTGGRFVYASLVRLLIL. Residues 97–236 lie on the Mitochondrial intermembrane side of the membrane; it reads KFVLSMSASK…FLEENKLLIG (140 aa). The Rieske domain occupies 146 to 234; the sequence is INLANSVDLG…YSFLEENKLL (89 aa). Residues Cys179, His181, Cys198, and His201 each contribute to the [2Fe-2S] cluster site. Cys184 and Cys200 form a disulfide bridge.

Belongs to the Rieske iron-sulfur protein family. As to quaternary structure, component of the ubiquinol-cytochrome c oxidoreductase (cytochrome b-c1 complex, complex III, CIII), a multisubunit enzyme composed of 3 respiratory subunits cytochrome b, cytochrome c1 and Rieske protein, 2 core protein subunits, and several low-molecular weight protein subunits. The complex exists as an obligatory dimer and forms supercomplexes (SCs) in the inner mitochondrial membrane with cytochrome c oxidase (complex IV, CIV). The cofactor is [2Fe-2S] cluster.

The protein localises to the mitochondrion inner membrane. It catalyses the reaction a quinol + 2 Fe(III)-[cytochrome c](out) = a quinone + 2 Fe(II)-[cytochrome c](out) + 2 H(+)(out). In terms of biological role, component of the ubiquinol-cytochrome c oxidoreductase, a multisubunit transmembrane complex that is part of the mitochondrial electron transport chain which drives oxidative phosphorylation. The respiratory chain contains 3 multisubunit complexes succinate dehydrogenase (complex II, CII), ubiquinol-cytochrome c oxidoreductase (cytochrome b-c1 complex, complex III, CIII) and cytochrome c oxidase (complex IV, CIV), that cooperate to transfer electrons derived from NADH and succinate to molecular oxygen, creating an electrochemical gradient over the inner membrane that drives transmembrane transport and the ATP synthase. The cytochrome b-c1 complex catalyzes electron transfer from ubiquinol to cytochrome c, linking this redox reaction to translocation of protons across the mitochondrial inner membrane, with protons being carried across the membrane as hydrogens on the quinol. In the process called Q cycle, 2 protons are consumed from the matrix, 4 protons are released into the intermembrane space and 2 electrons are passed to cytochrome c. The Rieske protein is a catalytic core subunit containing a [2Fe-2S] iron-sulfur cluster. It cycles between 2 conformational states during catalysis to transfer electrons from the quinol bound in the Q(0) site in cytochrome b to cytochrome c1. The protein is Cytochrome b-c1 complex subunit Rieske-4, mitochondrial of Nicotiana tabacum (Common tobacco).